The following is a 633-amino-acid chain: Chaperone protein HtpG (633 aa).

Residues 1 to 341 (MTAPHETMSF…SADLPLNVSR (341 aa)) are a; substrate-binding. Positions 342–562 (ELLQESRDVK…EGDMSGYLQR (221 aa)) are b. Positions 563 to 633 (LLKQAGQKAP…YVQRVNKLLA (71 aa)) are c.

It belongs to the heat shock protein 90 family. As to quaternary structure, homodimer.

It localises to the cytoplasm. In terms of biological role, molecular chaperone. Has ATPase activity. The chain is Chaperone protein HtpG from Cupriavidus necator (strain ATCC 17699 / DSM 428 / KCTC 22496 / NCIMB 10442 / H16 / Stanier 337) (Ralstonia eutropha).